Consider the following 466-residue polypeptide: Ribulose bisphosphate carboxylase (466 aa).

Position 111 (Asn111) interacts with substrate. Lys166 functions as the Proton acceptor in the catalytic mechanism. Position 168 (Lys168) interacts with substrate. Residues Lys191, Asp193, and Glu194 each contribute to the Mg(2+) site. Position 191 is an N6-carboxylysine (Lys191). His287 serves as the catalytic Proton acceptor. Arg288, His321, and Ser368 together coordinate substrate.

It belongs to the RuBisCO large chain family. Type II subfamily. In terms of assembly, homodimer. The cofactor is Mg(2+).

It catalyses the reaction 2 (2R)-3-phosphoglycerate + 2 H(+) = D-ribulose 1,5-bisphosphate + CO2 + H2O. The catalysed reaction is D-ribulose 1,5-bisphosphate + O2 = 2-phosphoglycolate + (2R)-3-phosphoglycerate + 2 H(+). In terms of biological role, ruBisCO catalyzes two reactions: the carboxylation of D-ribulose 1,5-bisphosphate, the primary event in carbon dioxide fixation, as well as the oxidative fragmentation of the pentose substrate. Both reactions occur simultaneously and in competition at the same active site. The chain is Ribulose bisphosphate carboxylase from Rhodospirillum rubrum (strain ATCC 11170 / ATH 1.1.1 / DSM 467 / LMG 4362 / NCIMB 8255 / S1).